A 912-amino-acid chain; its full sequence is Tiger protein E1 (912 aa).

Positions 1–22 (MKLKHLTIFLFIFIYRFLFVKS) are cleaved as a signal peptide. The Extracellular segment spans residues 23-815 (DCYLINNERP…YSENKSSGFP (793 aa)). N54, N108, N164, N183, N232, N268, N323, N356, N398, N407, N568, N637, N653, N658, N706, N716, N763, N774, N781, and N809 each carry an N-linked (GlcNAc...) asparagine glycan. 2 consecutive IPT/TIG domains span residues 532–609 (SSDQ…GPFT) and 612–686 (PVIE…PLII). Residues 715-796 (TNTSDIDQTA…DGQYFIAQIF (82 aa)) form the IPT/TIG 3 domain. A helical membrane pass occupies residues 816–836 (NEMYIGIVAIIIFLALIFFAI). The Cytoplasmic portion of the chain corresponds to 837-912 (KTQVEKYIEE…IRCCFKEHTD (76 aa)).

The protein resides in the cell membrane. The protein is Tiger protein E1 (tgrE1) of Dictyostelium discoideum (Social amoeba).